The following is a 170-amino-acid chain: MPRSRANGNFIDKTSSIVANILLRIIPTTSGEKKAFTYYRDGMLAQSEGNYAEALQNYYEATRLEIDPYDRSYILYNIGLIHTSNGEHTKALEYYFRALERNPFLPQAFNNMAVICHYRGEQAILQGDSEIAEAWFDQAAEYWKQAIALTPGNYIEAQNWLKITKRFEFE.

TPR repeat units follow at residues 35–68 (AFTY…EIDP), 72–105 (SYIL…NPFL), and 120–153 (GEQA…TPGN).

This sequence belongs to the Ycf3 family.

The protein resides in the plastid. It is found in the chloroplast thylakoid membrane. In terms of biological role, essential for the assembly of the photosystem I (PSI) complex. May act as a chaperone-like factor to guide the assembly of the PSI subunits. In Agrostis stolonifera (Creeping bentgrass), this protein is Photosystem I assembly protein Ycf3.